A 176-amino-acid polypeptide reads, in one-letter code: NAD(P)H-quinone oxidoreductase subunit 6, chloroplastic (176 aa).

The next 5 helical transmembrane spans lie at isoleucine 10–threonine 30, isoleucine 33–leucine 53, valine 60–phenylalanine 80, isoleucine 95–isoleucine 115, and phenylalanine 152–threonine 172.

It belongs to the complex I subunit 6 family. In terms of assembly, NDH is composed of at least 16 different subunits, 5 of which are encoded in the nucleus.

It localises to the plastid. The protein localises to the chloroplast thylakoid membrane. It catalyses the reaction a plastoquinone + NADH + (n+1) H(+)(in) = a plastoquinol + NAD(+) + n H(+)(out). It carries out the reaction a plastoquinone + NADPH + (n+1) H(+)(in) = a plastoquinol + NADP(+) + n H(+)(out). Functionally, NDH shuttles electrons from NAD(P)H:plastoquinone, via FMN and iron-sulfur (Fe-S) centers, to quinones in the photosynthetic chain and possibly in a chloroplast respiratory chain. The immediate electron acceptor for the enzyme in this species is believed to be plastoquinone. Couples the redox reaction to proton translocation, and thus conserves the redox energy in a proton gradient. The sequence is that of NAD(P)H-quinone oxidoreductase subunit 6, chloroplastic (ndhG) from Saccharum hybrid (Sugarcane).